A 484-amino-acid chain; its full sequence is Ribosomal RNA small subunit methyltransferase F (484 aa).

S-adenosyl-L-methionine is bound by residues 126–132, glutamate 150, aspartate 177, and aspartate 195; that span reads AAAPGSK. Cysteine 248 functions as the Nucleophile in the catalytic mechanism.

The protein belongs to the class I-like SAM-binding methyltransferase superfamily. RsmB/NOP family.

The protein localises to the cytoplasm. It catalyses the reaction cytidine(1407) in 16S rRNA + S-adenosyl-L-methionine = 5-methylcytidine(1407) in 16S rRNA + S-adenosyl-L-homocysteine + H(+). Specifically methylates the cytosine at position 1407 (m5C1407) of 16S rRNA. The chain is Ribosomal RNA small subunit methyltransferase F from Pectobacterium atrosepticum (strain SCRI 1043 / ATCC BAA-672) (Erwinia carotovora subsp. atroseptica).